We begin with the raw amino-acid sequence, 661 residues long: UvrABC system protein C (661 aa).

The GIY-YIG domain maps to 26–105 (AEPGCYLMRD…IKNHQPHFNV (80 aa)). Residues 215-250 (DELQNLLQEQMHKYADRTDYESAARVRDQLQGLDQL) form the UVR domain.

The protein belongs to the UvrC family. In terms of assembly, interacts with UvrB in an incision complex.

Its subcellular location is the cytoplasm. The UvrABC repair system catalyzes the recognition and processing of DNA lesions. UvrC both incises the 5' and 3' sides of the lesion. The N-terminal half is responsible for the 3' incision and the C-terminal half is responsible for the 5' incision. This is UvrABC system protein C from Synechococcus sp. (strain CC9902).